Consider the following 2269-residue polypeptide: MAHGLAPRSSELRVTESPMLSCQLSFKTEIHDRRTNLVPAPAATLARSSREAEESKICKIYTDWANHYLAKSGCPRLIKDLTQDIPDGVLLAEIIQIIANEKIEDINSCPKSHSQMIENVECCLSFLGARGVSVQGLSAEEVCNGNLKSILGLFFILSRYKQQQQHQQQYLQSLVELQQHVTHQTTGAAQLSQHKTQDMQSSLTARYTSPPGHSGIAAPQKKNTRLPGPSRVPAAGSGSNSSKGSSNLNRRSQSFNSIDKSKPLQYASGNDRGSMNGSGSVPSSTSGQQLASAIPSPTAGKTWRSKSMNMKHSATSSMLATKPPSPTSSPTPPSSSDRLRPPITDASKSAPGNQRSMLEKFRILNPRATSRTSPSVAEMALQEEDDLSEFGDEGTFSPTPPCGISKQQGKPSASAFAPPSKSNNCKNHNNKSLPQPKDKEDKNKTKNKASTPPKEEPVIVETSKKGSKIASLIPKGSKTSAASVKKESAIPASSSIPKPGLKAPTATSKPAGTQSCVPATTGGEKTKLNKGSQSIYMQRSLGGLENRKTSMVLSTSTSALSASTTSGLGGGCALGGNGAVQLPQQQQHNHPNTATVAPFMYRTYSENDCTTVVPPEPCLSPTKELVYGKTAKQCLEEISGEDPETRRMRTVKNIADLRQNLEETMSSLRGTQITHSTLETTFDTTVTTEVNGRGLPALSSRSSPMSWRLGQGSSPRLQAGDAPSYTPPRSSAGSTTVRYGEPSRLLYTAPLRRAAASGARGAEPGEKGGISEVGPEVDVTGYGSDGDILAKNVHADDISGYHTDGGIYSRNVDLYSRNVGRPAEMTPAREVVQKGVKEMQGEDSWDDSSSVSSGLSDTLDNISTDDLNPAPYSGISSRKSKAAQSNKETHRHIEQDASSWAGAEDLKKVDEEMEPGMDPSCKWKTSSPSSSCQGEDISQKTGLPMSQTGSWRRGMSAQVGITPPRTKGTSTSLKTPGKTDDAKASEKGKGSPKSPSIQRSPSDAGKSSGDEGKKPPSGIARPPTTSSFGYKKIPGPAGALITASGATLTSGSATLGKVPKSACIGKSTGISNGRKTSLDGAQHQDDAVLLGCGGSEVPLQYRSLPRPAKSSSGGSSVVSRSGHRSSSSSIDSNVSGKSAGGSGVAVGTPTSTKRRDTGKVGSGRSSPVTINQTDKEKVAGSDQEGTGLPTSPKSSPTSTQSGLRQPGSKYPDIASPTFRRLFGSKASSKPSSPGTPDSGKCPSALGSPHGTLARQASLDSPSSGTGSLGSMGGQSGGSSPLYGKTPDLGTDSPASSPASGLSLPSNARPWPPNLSSSSAGSKDTLSCHSMTSLHTSSESIDLPLPHHHGPKVTRTGSVKSTLSEGMPLDRNTLPKKGLRQTSHEEGKEWLRSHSTGGLQDTGSPLSPPGTTCANAGKYHYSNLLSPTSMSQYNIPSTSMSRSNSIPAQDSFELYGEGHPLGGSATSLEERPRGMSRSGSFRDSTDEVHGSSLSLVSSTSSLYSAQIRKLRRELDASQEKVATLTSQLAANAHLVAAFEKSLANMTCRLQSLTMTAEQKESELAELRETIEALKTQNTDAQTAIQVALNGPDHVHRDLRIRRQHSSESMSSINSAASHSSLGSAKDAEDKKKKKKSWLRSSFKQAFSKKKTNKPQSSHDEIEEMTDSSLPSSPKLLHISRQASSPQPLLSSPSTTELCECTEAEAEIILQLKNELREKELKLTDIRLEALSSAHHLDQIREAMNRMQNEIELLKAENDRLKSSGNTTPAATPAKTARPPSETSSTSSSSSRQSLGLSLNNLNITDTIMSDILLDDGYEGNLRKEGRSVRIVVTINSDSNKTKAMQKKQYLIGSIGVSGKTKWDVLDGVIRRLFKEYVFRVDPLTSLGMNSDSIVCYRMGDVVRSHASEVPELLPCGYLVGDNNVITVTLKGVKEGSIDDLVFDTLIPKPIIQRYLNLLMEHRRIILSGPSGTGKSYLATKLAYFILSKTGREVTDTNLATFNVDQKSSKDLRQYLSSLAEQCNTEECEIELPTVVILDNLHHIGSLSDIFNGFLNCKYHKCPYVIGTMNQGVSSSPNLELHHNFRWVLCANHTEPVKGFLGRFLRRKLIETEIDKNMRSNDLIKIIDWIPKIWQHLNSFLEAHSSSDVTIGPRLFLSCPMDADGSRVWFTDLWNYSLVPYLLEAVREGLQHEGQSLLQLRPEDVGYDGYSSSKDGAASKQVSQSDTEGDPLMNMLMRLQEAANYSSAQSCDSDSASHHEDLLDSSLESAL.

In terms of domain architecture, Calponin-homology (CH) spans serine 55–glutamine 162. The segment covering threonine 186–tyrosine 207 has biased composition (polar residues). Disordered regions lie at residues threonine 186–leucine 358 and serine 388–serine 532. Residues glycine 236 to serine 252 show a composition bias toward low complexity. Composition is skewed to polar residues over residues alanine 267–alanine 291 and serine 305–leucine 319. Residues proline 323–proline 333 are compositionally biased toward pro residues. Polar residues predominate over residues alanine 346 to serine 356. Low complexity predominate over residues proline 411 to serine 432. The span at threonine 505 to proline 518 shows a compositional bias: polar residues. Residues glutamate 644–glutamine 672 are a coiled coil. Disordered regions lie at residues glycine 692–valine 737, alanine 756–glutamate 776, valine 836–proline 1036, serine 1050–aspartate 1079, valine 1097–cysteine 1412, and glycine 1461–valine 1487. Composition is skewed to polar residues over residues serine 699–arginine 716 and proline 727–valine 737. Residues aspartate 847 to aspartate 860 show a composition bias toward low complexity. Polar residues predominate over residues glycine 874–asparagine 886. The segment covering proline 919–cysteine 932 has biased composition (low complexity). Polar residues predominate over residues glutamine 939–serine 950. Residues glycine 977–lysine 989 show a composition bias toward basic and acidic residues. Over residues serine 1110–lysine 1137 the composition is skewed to low complexity. Residues glycine 1163–glutamine 1172 are compositionally biased toward polar residues. Composition is skewed to low complexity over residues glycine 1185 to glycine 1202 and glycine 1223 to glycine 1234. Residues glycine 1266–glycine 1276 show a composition bias toward gly residues. The segment covering serine 1292 to serine 1305 has biased composition (low complexity). Polar residues-rich tracts occupy residues asparagine 1313–serine 1339 and arginine 1354–serine 1363. Basic and acidic residues predominate over residues threonine 1381–arginine 1391. The span at serine 1392–cysteine 1412 shows a compositional bias: polar residues. The stretch at serine 1499 to alanine 1586 forms a coiled coil. Disordered stretches follow at residues glutamine 1602 to proline 1672, asparagine 1756 to serine 1792, and glycine 2207 to leucine 2269. 2 stretches are compositionally biased toward low complexity: residues serine 1605–alanine 1623 and threonine 1765–serine 1792. Residues cysteine 1697–threonine 1765 are a coiled coil. A compositionally biased stretch (polar residues) spans tyrosine 2208 to aspartate 2224.

Belongs to the Nav/unc-53 family. As to quaternary structure, interacts with F-actin.

The protein resides in the nucleus outer membrane. The protein localises to the golgi apparatus. It is found in the cell projection. It localises to the lamellipodium. Its subcellular location is the filopodium. Its function is as follows. Involved in liver and heart organogenesis during embryo development. Plays a role in the migration of hepatoblasts from the intestinal endoderm during liver organogenesis; possibly by modulating actin polymerization during hepatoblast outgrowth. May be involved in neuron regeneration. This is Neuron navigator 3 (nav3) from Danio rerio (Zebrafish).